A 430-amino-acid polypeptide reads, in one-letter code: Replication factor C large subunit (430 aa).

75 to 82 serves as a coordination point for ATP; it reads GPPGTGKT.

It belongs to the activator 1 small subunits family. RfcL subfamily. In terms of assembly, heteromultimer composed of small subunits (RfcS) and large subunits (RfcL).

Part of the RFC clamp loader complex which loads the PCNA sliding clamp onto DNA. The sequence is that of Replication factor C large subunit from Nanoarchaeum equitans (strain Kin4-M).